A 428-amino-acid polypeptide reads, in one-letter code: Adenylosuccinate synthetase (428 aa).

GTP contacts are provided by residues 12–18 and 40–42; these read GDEGKGK and GHT. Catalysis depends on Asp-13, which acts as the Proton acceptor. Residues Asp-13 and Gly-40 each contribute to the Mg(2+) site. Residues 13–16, 38–41, Thr-130, Arg-144, Gln-225, Thr-240, and Arg-304 each bind IMP; these read DEGK and NAGH. The Proton donor role is filled by His-41. Position 300–306 (300–306) interacts with substrate; the sequence is VTTGRAR. GTP is bound by residues Arg-306, 332 to 334, and 414 to 416; these read KID and SVG.

This sequence belongs to the adenylosuccinate synthetase family. As to quaternary structure, homodimer. The cofactor is Mg(2+).

The protein resides in the cytoplasm. The enzyme catalyses IMP + L-aspartate + GTP = N(6)-(1,2-dicarboxyethyl)-AMP + GDP + phosphate + 2 H(+). The protein operates within purine metabolism; AMP biosynthesis via de novo pathway; AMP from IMP: step 1/2. In terms of biological role, plays an important role in the de novo pathway of purine nucleotide biosynthesis. Catalyzes the first committed step in the biosynthesis of AMP from IMP. The chain is Adenylosuccinate synthetase from Clostridium botulinum (strain 657 / Type Ba4).